Reading from the N-terminus, the 338-residue chain is Phospho-2-dehydro-3-deoxyheptonate aldolase (338 aa).

The protein belongs to the class-I DAHP synthase family. In terms of assembly, homotetramer. It depends on a divalent metal cation as a cofactor.

It carries out the reaction D-erythrose 4-phosphate + phosphoenolpyruvate + H2O = 7-phospho-2-dehydro-3-deoxy-D-arabino-heptonate + phosphate. It participates in metabolic intermediate biosynthesis; chorismate biosynthesis; chorismate from D-erythrose 4-phosphate and phosphoenolpyruvate: step 1/7. Its activity is regulated as follows. Inhibited by L-phenylalanine and L-tyrosine. Catalyzes the condensation of phosphoenolpyruvate (PEP) and D-erythrose-4-phosphate (E4P) giving rise to 3-deoxy-D-arabino-heptulosonate-7-phosphate (DAHP). This chain is Phospho-2-dehydro-3-deoxyheptonate aldolase (aroF), found in Thermotoga maritima (strain ATCC 43589 / DSM 3109 / JCM 10099 / NBRC 100826 / MSB8).